Consider the following 838-residue polypeptide: Probable bifunctional folylpolyglutamate synthase/dihydropteroate synthase (838 aa).

The folylpolyglutamate synthase stretch occupies residues 1–418; it reads MEYHEAVNFL…LVVGSLYVVA (418 aa). Residue 46–52 participates in ATP binding; the sequence is GSNGKGS. Residues 541–561 are disordered; that stretch reads AADAGEDDERGAGDASDAGHD. The 251-residue stretch at 569-819 folds into the Pterin-binding domain; sequence TAVMGILNVT…DVPENVAAVN (251 aa). The interval 571–838 is DHPS; sequence VMGILNVTPN…RFEADAERED (268 aa). Asn-576 contacts Mg(2+). (7,8-dihydropterin-6-yl)methyl diphosphate is bound by residues Thr-616, Asp-649, Asn-668, Asp-738, Lys-774, and 807-809; that span reads RVH.

It in the N-terminal section; belongs to the folylpolyglutamate synthase family. In the C-terminal section; belongs to the DHPS family. It depends on Mg(2+) as a cofactor.

It carries out the reaction (6S)-5,6,7,8-tetrahydrofolyl-(gamma-L-Glu)(n) + L-glutamate + ATP = (6S)-5,6,7,8-tetrahydrofolyl-(gamma-L-Glu)(n+1) + ADP + phosphate + H(+). The enzyme catalyses (7,8-dihydropterin-6-yl)methyl diphosphate + 4-aminobenzoate = 7,8-dihydropteroate + diphosphate. The protein operates within cofactor biosynthesis; tetrahydrofolylpolyglutamate biosynthesis. It functions in the pathway cofactor biosynthesis; tetrahydrofolate biosynthesis; 7,8-dihydrofolate from 2-amino-4-hydroxy-6-hydroxymethyl-7,8-dihydropteridine diphosphate and 4-aminobenzoate: step 1/2. Can complement an H.volcanii mutant strain that is thymidine auxotroph because it lacks the two dihydrofolate reductase genes encoded by hdrA and hdrB. This is Probable bifunctional folylpolyglutamate synthase/dihydropteroate synthase (folCP) from Haloferax volcanii (strain ATCC 29605 / DSM 3757 / JCM 8879 / NBRC 14742 / NCIMB 2012 / VKM B-1768 / DS2) (Halobacterium volcanii).